We begin with the raw amino-acid sequence, 1412 residues long: ABC transporter C family member 3 (1412 aa).

Positions 1 to 34 (MELEEVGVEANQPNNDQGSKKQNKNKDKKVKKEK) are disordered. Residues 21–34 (KQNKNKDKKVKKEK) show a composition bias toward basic residues. The next 6 membrane-spanning stretches (helical) occupy residues 115-135 (FGLY…SQFV), 161-181 (MGYY…VCLY), 236-256 (VFQL…CLAL), 261-281 (IGWP…FNGI), 346-366 (AMLI…VFSS), and 379-399 (IFAA…LPII). Residues 119–405 (FVLSWFFYAI…LPIIVALGIQ (287 aa)) form the ABC transmembrane type-1 1 domain. The 224-residue stretch at 439 to 662 (IRDATLTWNQ…QKEFSGLLQA (224 aa)) folds into the ABC transporter 1 domain. 474–481 (GSVGSGKS) is a binding site for ATP. A run of 5 helical transmembrane segments spans residues 724-744 (WKYI…FFLM), 787-807 (IYIG…FLFF), 854-874 (NLMA…VATL), 875-895 (IIIS…CIIF), and 967-987 (WLGL…CLFI). Residues 735–1025 (FLMAFIFFLM…ATLQAADTET (291 aa)) form the ABC transmembrane type-1 2 domain. Residues 1062-1296 (ITFDNLVMRY…PAGLLNWLVE (235 aa)) enclose the ABC transporter 2 domain. Position 1096 to 1103 (1096 to 1103 (GRTGAGKS)) interacts with ATP. A disordered region spans residues 1316 to 1412 (GVNIDQITPP…DNDNSEAGDN (97 aa)). Residues 1342-1351 (NINSPPQQSL) show a composition bias toward polar residues. Over residues 1367 to 1397 (DNNNNNNNNNNNNNNNNNNNNNNNNNNNNND) the composition is skewed to low complexity. Positions 1398–1412 (NDNDNDNDNSEAGDN) are enriched in acidic residues.

It belongs to the ABC transporter superfamily. ABCC family. Conjugate transporter (TC 3.A.1.208) subfamily.

It localises to the membrane. The protein is ABC transporter C family member 3 (abcC3) of Dictyostelium discoideum (Social amoeba).